A 267-amino-acid chain; its full sequence is Small ribosomal subunit protein uS10m (267 aa).

The N-terminal 10 residues, 1 to 10 (MLSRILGVRN), are a transit peptide targeting the mitochondrion.

The protein belongs to the universal ribosomal protein uS10 family. As to quaternary structure, part of the mitochondrial small ribosomal subunit.

The protein localises to the mitochondrion. In terms of biological role, involved in mitochondrial genome encoded proteins translation. Involved in the binding of tRNA to the ribosomes. This chain is Small ribosomal subunit protein uS10m (RSM10), found in Debaryomyces hansenii (strain ATCC 36239 / CBS 767 / BCRC 21394 / JCM 1990 / NBRC 0083 / IGC 2968) (Yeast).